Consider the following 396-residue polypeptide: Probable sugar efflux transporter (396 aa).

12 consecutive transmembrane segments (helical) span residues 15–35 (VVTL…PVGL), 50–70 (VGIM…PFML), 81–101 (LICL…AWNF), 103–123 (VLVI…SITA), 136–156 (AQAL…GLPI), 169–189 (TFFA…KLLP), 209–229 (PALM…YTAY), 246–266 (FATV…LVFG), 275–295 (SLVS…LPAA), 301–321 (LAIL…GMQV), 333–353 (VAMA…ALVG), and 364–384 (AIGY…VLIF).

The protein belongs to the major facilitator superfamily. SotB (TC 2.A.1.2) family.

The protein localises to the cell inner membrane. Involved in the efflux of sugars. The physiological role may be the reduction of the intracellular concentration of toxic sugars or sugar metabolites. This Salmonella schwarzengrund (strain CVM19633) protein is Probable sugar efflux transporter.